A 182-amino-acid chain; its full sequence is Molybdopterin synthase catalytic subunit (182 aa).

Residues 119 to 120 (HR), Lys135, and 142 to 144 (KRE) each bind substrate. Positions 152–182 (VWRANRDGAPGQRIDTAEPAVGAGSGGEIDD) are disordered.

Belongs to the MoaE family. MOCS2B subfamily. As to quaternary structure, heterotetramer; composed of 2 small (MOCS2A) and 2 large (MOCS2B) subunits.

The protein localises to the cytoplasm. The catalysed reaction is 2 [molybdopterin-synthase sulfur-carrier protein]-C-terminal-Gly-aminoethanethioate + cyclic pyranopterin phosphate + H2O = molybdopterin + 2 [molybdopterin-synthase sulfur-carrier protein]-C-terminal Gly-Gly + 2 H(+). Its pathway is cofactor biosynthesis; molybdopterin biosynthesis. In terms of biological role, catalytic subunit of the molybdopterin synthase complex, a complex that catalyzes the conversion of precursor Z into molybdopterin. Acts by mediating the incorporation of 2 sulfur atoms from thiocarboxylated MOCS2A into precursor Z to generate a dithiolene group. This chain is Molybdopterin synthase catalytic subunit, found in Pyricularia oryzae (strain 70-15 / ATCC MYA-4617 / FGSC 8958) (Rice blast fungus).